Here is a 128-residue protein sequence, read N- to C-terminus: Large ribosomal subunit protein bL17 (128 aa).

It belongs to the bacterial ribosomal protein bL17 family. As to quaternary structure, part of the 50S ribosomal subunit. Contacts protein L32.

This chain is Large ribosomal subunit protein bL17, found in Pseudomonas savastanoi pv. phaseolicola (strain 1448A / Race 6) (Pseudomonas syringae pv. phaseolicola (strain 1448A / Race 6)).